The primary structure comprises 559 residues: Cocaine esterase (559 aa).

An N-terminal signal peptide occupies residues 1-26 (MRLHRLRARLSAVACGLLLLLVRGQG). Residue Gln27 is modified to Pyrrolidone carboxylic acid. Cysteines 95 and 123 form a disulfide. Asn111 carries N-linked (GlcNAc...) asparagine glycosylation. The Acyl-ester intermediate role is filled by Ser228. The N-linked (GlcNAc...) asparagine glycan is linked to Asn276. Cysteines 280 and 291 form a disulfide. Residues Glu345 and His457 each act as charge relay system in the active site. Positions 556–559 (HTEL) match the Prevents secretion from ER motif.

It belongs to the type-B carboxylesterase/lipase family. Monomer. In terms of processing, glycosylated. In terms of tissue distribution, preferentially expressed in intestine with moderate expression in liver. Within the intestine, highest expression is found in small intestine with lower expression in colon and rectum.

The protein localises to the endoplasmic reticulum lumen. The enzyme catalyses cocaine + H2O = ecgonine methyl ester + benzoate + H(+). The catalysed reaction is a carboxylic ester + H2O = an alcohol + a carboxylate + H(+). It catalyses the reaction 4-methylumbelliferyl acetate + H2O = 4-methylumbelliferone + acetate + H(+). It carries out the reaction 2-(5Z,8Z,11Z,14Z-eicosatetraenoyl)-glycerol + H2O = glycerol + (5Z,8Z,11Z,14Z)-eicosatetraenoate + H(+). The enzyme catalyses prostaglandin E2 1-glyceryl ester + H2O = prostaglandin E2 + glycerol + H(+). The catalysed reaction is prostaglandin F2alpha 1-glyceryl ester + H2O = prostaglandin F2alpha + glycerol + H(+). In terms of biological role, involved in the detoxification of xenobiotics and in the activation of ester and amide prodrugs. Shows high catalytic efficiency for hydrolysis of cocaine, 4-methylumbelliferyl acetate, heroin and 6-monoacetylmorphine. Hydrolyzes aspirin, substrates with large alcohol group and small acyl group and endogenous lipids such as triacylglycerol. Converts monoacylglycerides to free fatty acids and glycerol. Hydrolyzes of 2-arachidonoylglycerol and prostaglandins. In Homo sapiens (Human), this protein is Cocaine esterase.